Here is a 367-residue protein sequence, read N- to C-terminus: Ferredoxin--NADP reductase 2 (367 aa).

Positions 56, 64, 69, 109, 144, 309, and 350 each coordinate FAD.

Belongs to the ferredoxin--NADP reductase type 2 family. Homodimer. FAD is required as a cofactor.

The enzyme catalyses 2 reduced [2Fe-2S]-[ferredoxin] + NADP(+) + H(+) = 2 oxidized [2Fe-2S]-[ferredoxin] + NADPH. This chain is Ferredoxin--NADP reductase 2, found in Cupriavidus metallidurans (strain ATCC 43123 / DSM 2839 / NBRC 102507 / CH34) (Ralstonia metallidurans).